Reading from the N-terminus, the 210-residue chain is Ribosomal RNA large subunit methyltransferase E (210 aa).

S-adenosyl-L-methionine is bound by residues G61, W63, D81, D97, and D122. The active-site Proton acceptor is the K162.

The protein belongs to the class I-like SAM-binding methyltransferase superfamily. RNA methyltransferase RlmE family.

The protein localises to the cytoplasm. It catalyses the reaction uridine(2552) in 23S rRNA + S-adenosyl-L-methionine = 2'-O-methyluridine(2552) in 23S rRNA + S-adenosyl-L-homocysteine + H(+). Specifically methylates the uridine in position 2552 of 23S rRNA at the 2'-O position of the ribose in the fully assembled 50S ribosomal subunit. This is Ribosomal RNA large subunit methyltransferase E from Xanthomonas oryzae pv. oryzae (strain MAFF 311018).